Consider the following 481-residue polypeptide: UDP-glycosyltransferase 88F3 (481 aa).

UDP-alpha-D-glucose contacts are provided by residues Ser288, 357 to 358 (WA), 375 to 383 (HCGWNSVLE), and 397 to 400 (YAEQ).

Belongs to the UDP-glycosyltransferase family.

Its function is as follows. Glycosyltransferase that may possess chalcone and dihydrochalcone 2'-O-glucosyltransferase activity. The sequence is that of UDP-glycosyltransferase 88F3 from Pyrus communis (Pear).